Here is a 1342-residue protein sequence, read N- to C-terminus: MVYSYTEKKRIRKDFGKRPQVLDVPYLLSIQLDSFQKFIEQDPEGQYGLEAAFRSVFPIQSYSGNSELQYVSYRLGEPVFDVKECQIRGVTYSAPLRVKLRLVIYEREAPEGTVKDIKEQEVYMGEIPLMTENGTFVINGTERVIVSQLHRSPGVFFDSDKGKTHSSGKVLYNARIIPYRGSWLDFEFDPKDNLFVRIDRRRKLPATIILRALDFTTEQILDLFFDKVIFEIRDNKLQMELVPERLRGETASFDIEANGKVYVEKGRRITARHIRQLEKDDVTLIEVPVEYIVGKVAAKDYIDESTGELICAANMELSLDLLAKLSQSGYKRIDTLFTNDLDHGPYMSETLRVDPTNDRLSALVEIYRMMRPGEPPTREAAENLFENLFFSEDRYDLSAVGRMKFNRSLMRDEIEGSGILSKNDIIEVMKKLIDIRNGKGEVDDIDHLGNRRIRSVGEMAENQFRVGLVRVERAVKERLSLGDLDMLMPQDMINAKPISAAVKEFFGSSQLSQFMDQNNPLSEITHKRRISALGPGGLTRERAGFEVRDVHPTHYGRVCPIETPEGPNIGLINSLSVYAQTNEYGFLETPYRRVRDGIVTDEIHYLSAIEEGNFVIAQANSNLDDEGRFVEDLVTCRSKGESSLFSRDQVDYMDVSTQQVVSVGASLIPFLEHDDANRALMGANMQRQAVPTLRADKPLVGTGMERAVAVDSGVTSVAKRGGMVQYVDASRIVIKVNEDEMFPGEAGIDIYNLTKYTRSNQNTCISQMPCVSLGEPIERGDVLADGPSTDLGELALGQNMRVAFMPWNGYNFEDSILVSERVVQEDRFTSIHIQELACVSRDTKLGPEEITADIPNVGEAALSKLDESGIVYIGAEVKGGDILVGKVTPKGETQLTPEEKLLRAIFGEKASDVKDSSLRVPNSVSGTVIDVQVFTRDGVEKDKRALEIEEMQLKQAKKDLTEELQILEAGLFARIHDVLVAGGVEAEKLEKLPRDRWLELGLADEAKQNQLEQLAEQYDELKAEFEKKLEAKRRKITQGDDLAPGVLKIVKVYLAVKRQIQPGDKMAGRHGNKGVISKINPIEDMPYDENGTPVDIVLNPLGVPSRMNIGQILETHLGMAAKGIGDKINAMLKQQQEVAKLREFIQRAYDLGDNTRQQVDLNTFSDDEVLRLAENLKKGLPVATPVFDGAKEREIKGLLELGGIPTSGQITLYDGRTGERFERQVTVGYMYMLKLNHLVDDKMHARSTGSYSLVTQQPLGGKAQFGGQRFGEMEVWALEAYGAAYTLQEMLTVKSDDVNGRTKMYKNIVDGSHQMEPGMPESFNVLLKEIRSLGINIELEDE.

The protein belongs to the RNA polymerase beta chain family. The RNAP catalytic core consists of 2 alpha, 1 beta, 1 beta' and 1 omega subunit. When a sigma factor is associated with the core the holoenzyme is formed, which can initiate transcription.

It carries out the reaction RNA(n) + a ribonucleoside 5'-triphosphate = RNA(n+1) + diphosphate. Its function is as follows. DNA-dependent RNA polymerase catalyzes the transcription of DNA into RNA using the four ribonucleoside triphosphates as substrates. The chain is DNA-directed RNA polymerase subunit beta from Edwardsiella ictaluri (strain 93-146).